A 443-amino-acid polypeptide reads, in one-letter code: Carboxypeptidase M (443 aa).

The first 17 residues, 1–17 (MDFPCLWLGLLLPLVAA), serve as a signal peptide directing secretion. A Peptidase M14 domain is found at 21 to 311 (NYHRQEGMEA…ASLIEYIKQV (291 aa)). Residue asparagine 38 is glycosylated (N-linked (GlcNAc...) asparagine). Zn(2+) contacts are provided by histidine 83 and glutamate 86. Residues asparagine 115 and asparagine 164 are each glycosylated (N-linked (GlcNAc...) asparagine). Cystine bridges form between cysteine 138–cysteine 285, cysteine 242–cysteine 284, and cysteine 341–cysteine 410. Zn(2+) is bound at residue histidine 190. Glutamate 281 (proton donor/acceptor) is an active-site residue. 2 N-linked (GlcNAc...) asparagine glycosylation sites follow: asparagine 363 and asparagine 384. Residue serine 423 is the site of GPI-anchor amidated serine attachment. A propeptide spans 424–443 (AATKPSLFLFLVSLLHIFFK) (removed in mature form).

The protein belongs to the peptidase M14 family. The cofactor is Zn(2+).

Its subcellular location is the cell membrane. It carries out the reaction Cleavage of C-terminal arginine or lysine residues from polypeptides.. Its activity is regulated as follows. Inhibited by O-phenanthroline and MGTA and activated by cobalt. Specifically removes C-terminal basic residues (Arg or Lys) from peptides and proteins. It is believed to play important roles in the control of peptide hormone and growth factor activity at the cell surface, and in the membrane-localized degradation of extracellular proteins. The protein is Carboxypeptidase M (CPM) of Homo sapiens (Human).